The following is a 144-amino-acid chain: Granulocyte-macrophage colony-stimulating factor (144 aa).

The first 17 residues, 1–17 (MWLQNLLFLGTVVCSIS), serve as a signal peptide directing secretion. A glycan (O-linked (GalNAc...) serine) is linked at Ser-22. Thr-27 carries an O-linked (GalNAc...) threonine glycan. Asn-44 is a glycosylation site (N-linked (GlcNAc...) asparagine). Intrachain disulfides connect Cys-71-Cys-113 and Cys-105-Cys-138.

This sequence belongs to the GM-CSF family. Monomer. The signaling GM-CSF receptor complex is a dodecamer of two head-to-head hexamers of two alpha, two beta, and two ligand subunits.

The protein localises to the secreted. Cytokine that stimulates the growth and differentiation of hematopoietic precursor cells from various lineages, including granulocytes, macrophages, eosinophils and erythrocytes. The protein is Granulocyte-macrophage colony-stimulating factor (CSF2) of Canis lupus familiaris (Dog).